The sequence spans 262 residues: Malonyl-[acyl-carrier protein] O-methyltransferase (262 aa).

Belongs to the methyltransferase superfamily.

It catalyses the reaction malonyl-[ACP] + S-adenosyl-L-methionine = malonyl-[ACP] methyl ester + S-adenosyl-L-homocysteine. It participates in cofactor biosynthesis; biotin biosynthesis. Functionally, converts the free carboxyl group of a malonyl-thioester to its methyl ester by transfer of a methyl group from S-adenosyl-L-methionine (SAM). It allows to synthesize pimeloyl-ACP via the fatty acid synthetic pathway. This Dechloromonas aromatica (strain RCB) protein is Malonyl-[acyl-carrier protein] O-methyltransferase.